The chain runs to 157 residues: Large ribosomal subunit protein eL29 (157 aa).

The segment covering 1-26 has biased composition (basic residues); that stretch reads MAKSKNHTTHNQSRKWHRNGIKKPRS. The interval 1–32 is disordered; that stretch reads MAKSKNHTTHNQSRKWHRNGIKKPRSQRYESL. Lys-5 is modified (N6-methyllysine). At Ser-31 the chain carries Phosphoserine. At Lys-33 the chain carries N6-acetyllysine. Residues 121-157 form a disordered region; that stretch reads PKAKAKAKDQTKAQAAAPASIPAQAPKGAQATTKATE. A compositionally biased stretch (low complexity) spans 132–147; sequence KAQAAAPASIPAQAPK. A Phosphoserine modification is found at Ser-140.

Belongs to the eukaryotic ribosomal protein eL29 family. Component of the large ribosomal subunit.

It is found in the cytoplasm. In terms of biological role, component of the large ribosomal subunit. The ribosome is a large ribonucleoprotein complex responsible for the synthesis of proteins in the cell. This is Large ribosomal subunit protein eL29 (RPL29) from Macaca fascicularis (Crab-eating macaque).